The following is a 131-amino-acid chain: Holo-[acyl-carrier-protein] synthase (131 aa).

The Mg(2+) site is built by Asp8 and Glu58.

It belongs to the P-Pant transferase superfamily. AcpS family. Requires Mg(2+) as cofactor.

It is found in the cytoplasm. The catalysed reaction is apo-[ACP] + CoA = holo-[ACP] + adenosine 3',5'-bisphosphate + H(+). In terms of biological role, transfers the 4'-phosphopantetheine moiety from coenzyme A to a Ser of acyl-carrier-protein. This chain is Holo-[acyl-carrier-protein] synthase, found in Oenococcus oeni (strain ATCC BAA-331 / PSU-1).